The following is a 439-amino-acid chain: Histidinol dehydrogenase (439 aa).

The NAD(+) site is built by Tyr-127, Gln-185, and Asn-208. Ser-234, Gln-256, and His-259 together coordinate substrate. Zn(2+) contacts are provided by Gln-256 and His-259. Active-site proton acceptor residues include Glu-323 and His-324. His-324, Asp-357, Glu-411, and His-416 together coordinate substrate. Position 357 (Asp-357) interacts with Zn(2+). A Zn(2+)-binding site is contributed by His-416.

It belongs to the histidinol dehydrogenase family. Zn(2+) serves as cofactor.

The catalysed reaction is L-histidinol + 2 NAD(+) + H2O = L-histidine + 2 NADH + 3 H(+). The protein operates within amino-acid biosynthesis; L-histidine biosynthesis; L-histidine from 5-phospho-alpha-D-ribose 1-diphosphate: step 9/9. Catalyzes the sequential NAD-dependent oxidations of L-histidinol to L-histidinaldehyde and then to L-histidine. The protein is Histidinol dehydrogenase of Aliivibrio fischeri (strain ATCC 700601 / ES114) (Vibrio fischeri).